A 118-amino-acid chain; its full sequence is Nitrogenase-stabilizing/protective protein NifW (118 aa).

This sequence belongs to the NifW family. Homotrimer; associates with NifD.

May protect the nitrogenase Fe-Mo protein from oxidative damage. The protein is Nitrogenase-stabilizing/protective protein NifW of Rhodopseudomonas palustris (strain BisB5).